The chain runs to 503 residues: ATP synthase subunit alpha (503 aa).

ATP is bound at residue 169–176; the sequence is GDRKTGKT.

It belongs to the ATPase alpha/beta chains family. F-type ATPases have 2 components, CF(1) - the catalytic core - and CF(0) - the membrane proton channel. CF(1) has five subunits: alpha(3), beta(3), gamma(1), delta(1), epsilon(1). CF(0) has three main subunits: a(1), b(2) and c(9-12). The alpha and beta chains form an alternating ring which encloses part of the gamma chain. CF(1) is attached to CF(0) by a central stalk formed by the gamma and epsilon chains, while a peripheral stalk is formed by the delta and b chains.

It localises to the cell membrane. It catalyses the reaction ATP + H2O + 4 H(+)(in) = ADP + phosphate + 5 H(+)(out). Produces ATP from ADP in the presence of a proton gradient across the membrane. The alpha chain is a regulatory subunit. This Ligilactobacillus salivarius (strain UCC118) (Lactobacillus salivarius) protein is ATP synthase subunit alpha.